The sequence spans 171 residues: Odorant-binding protein 1b (171 aa).

The signal sequence occupies residues Met-1–Ala-19. Disulfide bonds link Cys-57/Cys-61 and Cys-76/Cys-169.

It belongs to the calycin superfamily. Lipocalin family. As to quaternary structure, may form a heterodimer with OBP1A. In terms of processing, the N-terminus may be blocked. In terms of tissue distribution, expressed in nasal mucosa (at protein level). Specifically detected in septal and lateral nasal glands.

Its subcellular location is the secreted. Its function is as follows. Binds the chemical odorant 2-isobutyl-3-methoxypyrazine. This is Odorant-binding protein 1b from Mus musculus (Mouse).